The sequence spans 452 residues: Pup--protein ligase (452 aa).

Glutamate 9 is a binding site for Mg(2+). Arginine 53 serves as a coordination point for ATP. Tyrosine 55 is a Mg(2+) binding site. Catalysis depends on aspartate 57, which acts as the Proton acceptor. Residue glutamate 63 participates in Mg(2+) binding. 2 residues coordinate ATP: threonine 66 and tryptophan 419.

This sequence belongs to the Pup ligase/Pup deamidase family. Pup-conjugating enzyme subfamily.

The enzyme catalyses ATP + [prokaryotic ubiquitin-like protein]-L-glutamate + [protein]-L-lysine = ADP + phosphate + N(6)-([prokaryotic ubiquitin-like protein]-gamma-L-glutamyl)-[protein]-L-lysine.. The protein operates within protein degradation; proteasomal Pup-dependent pathway. It participates in protein modification; protein pupylation. Catalyzes the covalent attachment of the prokaryotic ubiquitin-like protein modifier Pup to the proteasomal substrate proteins, thereby targeting them for proteasomal degradation. This tagging system is termed pupylation. The ligation reaction involves the side-chain carboxylate of the C-terminal glutamate of Pup and the side-chain amino group of a substrate lysine. In Mycobacterium avium (strain 104), this protein is Pup--protein ligase.